A 1350-amino-acid chain; its full sequence is ABC transporter C family member 13 (1350 aa).

An ABC transmembrane type-1 1 domain is found at 107–390 (NKKSIFIVIL…LPEAIHNLLG (284 aa)). A run of 4 helical transmembrane segments spans residues 111 to 131 (IFIV…LKYF), 143 to 163 (TFLT…SYTL), 215 to 235 (IGLF…FPIQ), and 240 to 260 (LALL…VMII). The disordered stretch occupies residues 462–481 (EKSEEEYETTTTTTDDNNNN). The span at 470 to 481 (TTTTTTDDNNNN) shows a compositional bias: low complexity. The ABC transporter 1 domain maps to 473–693 (TTTDDNNNNN…IDFESIMKTK (221 aa)). Residue 505-512 (GVVGSGKT) participates in ATP binding. The ABC transmembrane type-1 2 domain occupies 774 to 1061 (KHGSSTFFFI…FVELEVKMNS (288 aa)). The next 6 membrane-spanning stretches (helical) occupy residues 776–796 (GSST…QAIF), 816–836 (DSFY…TLVI), 887–907 (IDLL…TVVF), 909–929 (ICVM…LIIV), 1003–1023 (IGVR…FFSL), and 1029–1049 (GFSV…NWAV). In terms of domain architecture, ABC transporter 2 spans 1103–1337 (IEFRDVEIRY…KNSKFSKLVK (235 aa)). ATP is bound at residue 1137–1144 (GRTGAGKS).

Belongs to the ABC transporter superfamily. ABCC family. Conjugate transporter (TC 3.A.1.208) subfamily.

Its subcellular location is the membrane. The polypeptide is ABC transporter C family member 13 (abcC13) (Dictyostelium discoideum (Social amoeba)).